We begin with the raw amino-acid sequence, 140 residues long: Holo-[acyl-carrier-protein] synthase (140 aa).

Mg(2+) is bound by residues D8 and E57.

This sequence belongs to the P-Pant transferase superfamily. AcpS family. The cofactor is Mg(2+).

It is found in the cytoplasm. The enzyme catalyses apo-[ACP] + CoA = holo-[ACP] + adenosine 3',5'-bisphosphate + H(+). In terms of biological role, transfers the 4'-phosphopantetheine moiety from coenzyme A to a Ser of acyl-carrier-protein. The polypeptide is Holo-[acyl-carrier-protein] synthase (Beijerinckia indica subsp. indica (strain ATCC 9039 / DSM 1715 / NCIMB 8712)).